Here is a 390-residue protein sequence, read N- to C-terminus: NADH-quinone oxidoreductase subunit D (390 aa).

This sequence belongs to the complex I 49 kDa subunit family. As to quaternary structure, NDH-1 is composed of 14 different subunits. Subunits NuoB, C, D, E, F, and G constitute the peripheral sector of the complex.

The protein localises to the cell inner membrane. It carries out the reaction a quinone + NADH + 5 H(+)(in) = a quinol + NAD(+) + 4 H(+)(out). Functionally, NDH-1 shuttles electrons from NADH, via FMN and iron-sulfur (Fe-S) centers, to quinones in the respiratory chain. The immediate electron acceptor for the enzyme in this species is believed to be ubiquinone. Couples the redox reaction to proton translocation (for every two electrons transferred, four hydrogen ions are translocated across the cytoplasmic membrane), and thus conserves the redox energy in a proton gradient. This Geobacter metallireducens (strain ATCC 53774 / DSM 7210 / GS-15) protein is NADH-quinone oxidoreductase subunit D.